A 336-amino-acid chain; its full sequence is MMKIIFFGTPLFAVPTLKKLLDNPKIEVTAVVTQPDKRRGRGNKLIPSPVKSVAVAHNIPVWQPRRVKKNPETLNLLREAQADVFVVVAYGQILSTEILEMPKLGCVNVHGSILPKYRGAAPIQWSIYHGEAETGNTTMLMDVGMDTGPMLLKSIIPIGLLDNAVSIAEILAKDGADLLLETLLRLEDKEIEPIPQDNSLATYAPLIQNSDYEIDWSRSALDIHNQIRGFFPNCFTSFRGQSLKVMATIPVGTEYWSELPPELQKLEKVWSSESEVVGNIGEVVKVIKGLGPVVQTGSGWLLLWQVQLAGKKVVSGWDFANGTRLLVGEVSEVFSR.

Position 112–115 (112–115 (SILP)) interacts with (6S)-5,6,7,8-tetrahydrofolate.

Belongs to the Fmt family.

The enzyme catalyses L-methionyl-tRNA(fMet) + (6R)-10-formyltetrahydrofolate = N-formyl-L-methionyl-tRNA(fMet) + (6S)-5,6,7,8-tetrahydrofolate + H(+). Its function is as follows. Attaches a formyl group to the free amino group of methionyl-tRNA(fMet). The formyl group appears to play a dual role in the initiator identity of N-formylmethionyl-tRNA by promoting its recognition by IF2 and preventing the misappropriation of this tRNA by the elongation apparatus. This Trichodesmium erythraeum (strain IMS101) protein is Methionyl-tRNA formyltransferase.